The chain runs to 545 residues: CTP synthase (545 aa).

The segment at 1–266 (MTHFIFVTGG…DDLICERFGF (266 aa)) is amidoligase domain. S13 is a binding site for CTP. S13 contacts UTP. Residues 14-19 (SLGKGI) and D71 each bind ATP. Residues D71 and E140 each coordinate Mg(2+). CTP is bound by residues 147-149 (DIE), 187-192 (KTKPTQ), and K223. UTP contacts are provided by residues 187-192 (KTKPTQ) and K223. Residue 239–241 (KDA) coordinates ATP. A Glutamine amidotransferase type-1 domain is found at 292–543 (RVAMVGKYVE…IDAAKTQHQK (252 aa)). G353 contacts L-glutamine. C380 (nucleophile; for glutamine hydrolysis) is an active-site residue. Residues 381 to 384 (LGMQ), E404, and R471 each bind L-glutamine. Residues H516 and E518 contribute to the active site.

The protein belongs to the CTP synthase family. In terms of assembly, homotetramer.

The enzyme catalyses UTP + L-glutamine + ATP + H2O = CTP + L-glutamate + ADP + phosphate + 2 H(+). It carries out the reaction L-glutamine + H2O = L-glutamate + NH4(+). The catalysed reaction is UTP + NH4(+) + ATP = CTP + ADP + phosphate + 2 H(+). It participates in pyrimidine metabolism; CTP biosynthesis via de novo pathway; CTP from UDP: step 2/2. With respect to regulation, allosterically activated by GTP, when glutamine is the substrate; GTP has no effect on the reaction when ammonia is the substrate. The allosteric effector GTP functions by stabilizing the protein conformation that binds the tetrahedral intermediate(s) formed during glutamine hydrolysis. Inhibited by the product CTP, via allosteric rather than competitive inhibition. Catalyzes the ATP-dependent amination of UTP to CTP with either L-glutamine or ammonia as the source of nitrogen. Regulates intracellular CTP levels through interactions with the four ribonucleotide triphosphates. The sequence is that of CTP synthase from Acinetobacter baumannii (strain ACICU).